Reading from the N-terminus, the 254-residue chain is NAD-dependent protein deacetylase 1 (254 aa).

One can recognise a Deacetylase sirtuin-type domain in the interval 5–254; sequence ASDLRSGVER…GETLGPFVGN (250 aa). Residues Ala31, Thr35, Phe42, Arg43, Gln108, Ile110, Asp111, and His128 each contribute to the NAD(+) site. Nicotinamide is bound at residue Phe42. Residues Ile110 and Asp111 each contribute to the nicotinamide site. Residue His128 is the Proton acceptor of the active site. Zn(2+)-binding residues include Cys136, Cys139, Cys160, and Cys163. 5 residues coordinate NAD(+): Ser201, Ser202, Asn226, Asp243, and Ile244.

Belongs to the sirtuin family. Class U subfamily. It depends on Zn(2+) as a cofactor.

It is found in the cytoplasm. It carries out the reaction N(6)-acetyl-L-lysyl-[protein] + NAD(+) + H2O = 2''-O-acetyl-ADP-D-ribose + nicotinamide + L-lysyl-[protein]. Functionally, NAD-dependent protein deacetylase which modulates the activities of several enzymes which are inactive in their acetylated form. The protein is NAD-dependent protein deacetylase 1 of Bradyrhizobium diazoefficiens (strain JCM 10833 / BCRC 13528 / IAM 13628 / NBRC 14792 / USDA 110).